We begin with the raw amino-acid sequence, 89 residues long: Co-chaperonin GroES (89 aa).

This sequence belongs to the GroES chaperonin family. Heptamer of 7 subunits arranged in a ring. Interacts with the chaperonin GroEL.

The protein localises to the cytoplasm. In terms of biological role, together with the chaperonin GroEL, plays an essential role in assisting protein folding. The GroEL-GroES system forms a nano-cage that allows encapsulation of the non-native substrate proteins and provides a physical environment optimized to promote and accelerate protein folding. GroES binds to the apical surface of the GroEL ring, thereby capping the opening of the GroEL channel. The polypeptide is Co-chaperonin GroES (Parabacteroides distasonis (strain ATCC 8503 / DSM 20701 / CIP 104284 / JCM 5825 / NCTC 11152)).